The following is a 110-amino-acid chain: Flagellar hook-basal body complex protein FliE (110 aa).

This sequence belongs to the FliE family.

It is found in the bacterial flagellum basal body. The protein is Flagellar hook-basal body complex protein FliE of Bordetella petrii (strain ATCC BAA-461 / DSM 12804 / CCUG 43448).